The following is a 355-amino-acid chain: Blue-sensitive opsin (355 aa).

Over 1–36 (MNGTEGINFYVPLSNKTGLVRSPFEYPQYYLAEPWK) the chain is Extracellular. 2 N-linked (GlcNAc...) asparagine glycosylation sites follow: Asn2 and Asn15. A helical membrane pass occupies residues 37 to 61 (YKVVCCYIFFLIFTGLPINILTLLV). At 62–73 (TFKHKKLRQPLN) the chain is on the cytoplasmic side. Residues 74-98 (YILVNLAVADLFMACFGFTVTFYTA) traverse the membrane as a helical segment. Residues 99–113 (WNGYFIFGPIGCAIE) lie on the Extracellular side of the membrane. Cys110 and Cys187 are disulfide-bonded. Residues 114 to 133 (GFFATLGGQVALWSLVVLAI) form a helical membrane-spanning segment. At 134 to 152 (ERYIVVCKPMGNFRFSATH) the chain is on the cytoplasmic side. A helical membrane pass occupies residues 153–176 (ALMGISFTWFMSFSCAAPPLLGWS). The Extracellular segment spans residues 177 to 202 (RYIPEGMQCSCGPDYYTLNPDYHNES). N-linked (GlcNAc...) asparagine glycosylation occurs at Asn200. The helical transmembrane segment at 203–230 (YVLYMFGVHFVIPVVVIFFSYGRLICKV) threads the bilayer. Over 231–252 (REAAAQQQESASTQKAEREVTR) the chain is Cytoplasmic. A helical membrane pass occupies residues 253–276 (MVILMVLGFLLAWTPYAMVAFWIF). At 277 to 284 (TNKGVDFS) the chain is on the extracellular side. Residues 285-309 (ATLMSVPAFFSKSSSLYNPIIYVLM) traverse the membrane as a helical segment. The residue at position 296 (Lys296) is an N6-(retinylidene)lysine. Topologically, residues 310-355 (NKQFRNCMITTICCGKNPFGDEDVSSSVSQSKTEVSSVSSSQVSPA) are cytoplasmic. 2 S-palmitoyl cysteine lipidation sites follow: Cys322 and Cys323. The interval 332-355 (DVSSSVSQSKTEVSSVSSSQVSPA) is disordered. Residues 334 to 355 (SSSVSQSKTEVSSVSSSQVSPA) are compositionally biased toward low complexity.

This sequence belongs to the G-protein coupled receptor 1 family. Opsin subfamily. Post-translationally, phosphorylated on some or all of the serine and threonine residues present in the C-terminal region.

It localises to the membrane. In terms of biological role, visual pigments are the light-absorbing molecules that mediate vision. They consist of an apoprotein, opsin, covalently linked to cis-retinal. This opsin uses a vitamin A2 chromophore. The protein is Blue-sensitive opsin of Anolis carolinensis (Green anole).